We begin with the raw amino-acid sequence, 329 residues long: Ankyrin repeat and SOCS box protein 5 (329 aa).

ANK repeat units follow at residues 69–98 (ADRS…NVNA), 102–131 (DHIT…NVNA), 135–164 (DGVT…KAQL), 167–196 (CLPS…DVDQ), 200–229 (HLGT…DVQK), and 232–261 (YWDT…DINA). Residues 278 to 329 (MVERILLQHEATPSSLCQLCRLCIRNYIGRPRLHLIPQLQLPTLLQNFLQYR) enclose the SOCS box domain.

This sequence belongs to the ankyrin SOCS box (ASB) family. Expressed in endothelial and smooth muscle cells of collateral arteries as well as in satellite cells.

It participates in protein modification; protein ubiquitination. Its function is as follows. May be a substrate-recognition component of a SCF-like ECS (Elongin-Cullin-SOCS-box protein) E3 ubiquitin-protein ligase complex which mediates the ubiquitination and subsequent proteasomal degradation of target proteins. May play a role in the initiation of arteriogenesis. In Oryctolagus cuniculus (Rabbit), this protein is Ankyrin repeat and SOCS box protein 5 (ASB5).